Here is a 427-residue protein sequence, read N- to C-terminus: Serine--tRNA ligase (427 aa).

231-233 (TAE) is a binding site for L-serine. 262–264 (RSE) contributes to the ATP binding site. Residue E285 participates in L-serine binding. Residue 349-352 (EISS) coordinates ATP. S385 is a binding site for L-serine.

This sequence belongs to the class-II aminoacyl-tRNA synthetase family. Type-1 seryl-tRNA synthetase subfamily. In terms of assembly, homodimer. The tRNA molecule binds across the dimer.

Its subcellular location is the cytoplasm. The enzyme catalyses tRNA(Ser) + L-serine + ATP = L-seryl-tRNA(Ser) + AMP + diphosphate + H(+). It catalyses the reaction tRNA(Sec) + L-serine + ATP = L-seryl-tRNA(Sec) + AMP + diphosphate + H(+). It functions in the pathway aminoacyl-tRNA biosynthesis; selenocysteinyl-tRNA(Sec) biosynthesis; L-seryl-tRNA(Sec) from L-serine and tRNA(Sec): step 1/1. Catalyzes the attachment of serine to tRNA(Ser). Is also able to aminoacylate tRNA(Sec) with serine, to form the misacylated tRNA L-seryl-tRNA(Sec), which will be further converted into selenocysteinyl-tRNA(Sec). In Rhizobium johnstonii (strain DSM 114642 / LMG 32736 / 3841) (Rhizobium leguminosarum bv. viciae), this protein is Serine--tRNA ligase.